The sequence spans 63 residues: Small integral membrane protein 43 (63 aa).

Important for interaction with SLC2A1 and SLC2A3 regions lie at residues Leu7–Ile29 and His51–Phe57. The chain crosses the membrane as a helical span at residues Leu9–Ile29.

As to quaternary structure, interacts with glucose transporters SLC2A1/GLUT1 and SLC2A3/GLUT3; the interactions may promote SLC2A1- and SLC2A3-mediated glucose transport to meet the energy needs of mesendoderm differentiation.

It localises to the cell membrane. Its function is as follows. Required for mesendoderm differentiation. Interacts with glucose transporters and promotes glucose uptake. Probably augments the glucose uptake capacity of glucose transporter proteins to meet the energy needs of mesendoderm differentiation. The sequence is that of Small integral membrane protein 43 from Homo sapiens (Human).